A 352-amino-acid polypeptide reads, in one-letter code: N-acetyl-gamma-glutamyl-phosphate reductase (352 aa).

Residue C158 is part of the active site.

This sequence belongs to the NAGSA dehydrogenase family. Type 1 subfamily.

It localises to the cytoplasm. It catalyses the reaction N-acetyl-L-glutamate 5-semialdehyde + phosphate + NADP(+) = N-acetyl-L-glutamyl 5-phosphate + NADPH + H(+). It functions in the pathway amino-acid biosynthesis; L-arginine biosynthesis; N(2)-acetyl-L-ornithine from L-glutamate: step 3/4. Its function is as follows. Catalyzes the NADPH-dependent reduction of N-acetyl-5-glutamyl phosphate to yield N-acetyl-L-glutamate 5-semialdehyde. The chain is N-acetyl-gamma-glutamyl-phosphate reductase from Mycobacterium bovis (strain BCG / Tokyo 172 / ATCC 35737 / TMC 1019).